The chain runs to 541 residues: 5' exonuclease Apollo (541 aa).

Residue K334 forms a Glycyl lysine isopeptide (Lys-Gly) (interchain with G-Cter in SUMO2) linkage. Residues 455–475 are disordered; it reads PLLSRGDSGSPARGNQSDCVG. The short motif at 492–507 is the TBM element; it reads ESRGLALKYLLTPVHF.

This sequence belongs to the DNA repair metallo-beta-lactamase (DRMBL) family. Interacts with MUS81, MRE11 and FANCD2. Interacts with HSPA2, HSPA8 and HSPA14. Interacts with SPAG5. Interacts with TERF2; the interaction is direct. In terms of processing, ubiquitinated, leading to its degradation. Interaction with TERF2 protects it from ubiquitination.

The protein localises to the chromosome. It localises to the telomere. Its subcellular location is the nucleus. The protein resides in the cytoplasm. It is found in the cytoskeleton. The protein localises to the microtubule organizing center. It localises to the centrosome. The enzyme catalyses a beta-lactam + H2O = a substituted beta-amino acid. Functionally, 5'-3' exonuclease that plays a central role in telomere maintenance and protection during S-phase. Participates in the protection of telomeres against non-homologous end-joining (NHEJ)-mediated repair, thereby ensuring that telomeres do not fuse. Plays a key role in telomeric loop (T loop) formation by being recruited by TERF2 at the leading end telomeres and by processing leading-end telomeres immediately after their replication via its exonuclease activity: generates 3' single-stranded overhang at the leading end telomeres avoiding blunt leading-end telomeres that are vulnerable to end-joining reactions and expose the telomere end in a manner that activates the DNA repair pathways. Together with TERF2, required to protect telomeres from replicative damage during replication by controlling the amount of DNA topoisomerase (TOP1, TOP2A and TOP2B) needed for telomere replication during fork passage and prevent aberrant telomere topology. Also involved in response to DNA damage: plays a role in response to DNA interstrand cross-links (ICLs) by facilitating double-strand break formation. In case of spindle stress, involved in prophase checkpoint. Possesses beta-lactamase activity, catalyzing the hydrolysis of penicillin G and nitrocefin. Exhibits no activity towards other beta-lactam antibiotic classes including cephalosporins (cefotaxime) and carbapenems (imipenem). The polypeptide is 5' exonuclease Apollo (Dclre1b) (Mus musculus (Mouse)).